The following is a 912-amino-acid chain: Protein SLFN14 (912 aa).

The interval 206–391 is required for endoribonuclease activity; that stretch reads ESTHVEFKRF…KVHKFKEALQ (186 aa). The tract at residues 392–571 is required for ribosome binding; the sequence is RHLFPVTQEE…QMGCEFFNLL (180 aa). ATP is bound at residue 593–600; it reads CFPGVRKT.

It belongs to the Schlafen family. Subgroup III subfamily. As to quaternary structure, associates with ribosomes in an ATP-independent manner. The cofactor is Mg(2+). It depends on Mn(2+) as a cofactor. As to expression, expressed in megakaryocytes and platelets (at protein level). Weakly expressed in melanocytes and malignant melanoma cells.

Its subcellular location is the nucleus. Functionally, shows no ribosome-associated and endoribonuclease activities. Displays polysome-associated endoribonuclease activity towards mRNAs and rRNAs. May play a role in RNA surveillance pathways by recognizing stalled ribosomes and triggering endonucleolytic cleavage of aberrant mRNAs. Cleaves different types of rRNAs and mRNAs in a magnesium- and manganese-dependent and ATP-independent manner. Involved in correct maturation of megakaryocytes and especially important for proplatelet extension. This chain is Protein SLFN14, found in Homo sapiens (Human).